A 272-amino-acid chain; its full sequence is Putative phosphoenolpyruvate synthase regulatory protein (272 aa).

Residue 152 to 159 (GVSRSGKT) participates in ADP binding.

This sequence belongs to the pyruvate, phosphate/water dikinase regulatory protein family. PSRP subfamily.

It catalyses the reaction [pyruvate, water dikinase] + ADP = [pyruvate, water dikinase]-phosphate + AMP + H(+). The enzyme catalyses [pyruvate, water dikinase]-phosphate + phosphate + H(+) = [pyruvate, water dikinase] + diphosphate. Functionally, bifunctional serine/threonine kinase and phosphorylase involved in the regulation of the phosphoenolpyruvate synthase (PEPS) by catalyzing its phosphorylation/dephosphorylation. The sequence is that of Putative phosphoenolpyruvate synthase regulatory protein from Alcanivorax borkumensis (strain ATCC 700651 / DSM 11573 / NCIMB 13689 / SK2).